Reading from the N-terminus, the 39-residue chain is Phosphatase RapI inhibitor (39 aa).

The propeptide occupies 1–34 (MKISRILLAAVILSSVFSITYLQSDHNTEIKVAA).

This sequence belongs to the Phr family. In terms of processing, contains a predicted signal peptide cleavage site in the N-terminal region, however the propeptide is probably subject to only one processing event, at the N-terminal end of the mature peptide.

It is found in the secreted. It localises to the cytoplasm. Its function is as follows. Intercellular signaling molecule that inhibits excision of the mobile genetic element ICEBs1 when cells are crowded by cells that contain ICEBs1 and produce the PhrI peptide. Secreted during production, but the mature peptide acts intracellularly, indicating that it needs to be imported into the cell to function. Acts by inhibiting RapI activity. The sequence is that of Phosphatase RapI inhibitor (phrI) from Bacillus subtilis (strain 168).